A 671-amino-acid polypeptide reads, in one-letter code: DNA ligase (671 aa).

NAD(+) contacts are provided by residues 32-36, 81-82, and Glu113; these read DAEYD and SL. Catalysis depends on Lys115, which acts as the N6-AMP-lysine intermediate. 4 residues coordinate NAD(+): Arg136, Glu173, Lys290, and Lys314. Residues Cys408, Cys411, Cys426, and Cys432 each contribute to the Zn(2+) site. In terms of domain architecture, BRCT spans 593–671; sequence EIDSPFAGKT…ETEMLRLLGS (79 aa).

It belongs to the NAD-dependent DNA ligase family. LigA subfamily. Requires Mg(2+) as cofactor. Mn(2+) serves as cofactor.

It carries out the reaction NAD(+) + (deoxyribonucleotide)n-3'-hydroxyl + 5'-phospho-(deoxyribonucleotide)m = (deoxyribonucleotide)n+m + AMP + beta-nicotinamide D-nucleotide.. DNA ligase that catalyzes the formation of phosphodiester linkages between 5'-phosphoryl and 3'-hydroxyl groups in double-stranded DNA using NAD as a coenzyme and as the energy source for the reaction. It is essential for DNA replication and repair of damaged DNA. This chain is DNA ligase, found in Escherichia coli O6:H1 (strain CFT073 / ATCC 700928 / UPEC).